A 130-amino-acid chain; its full sequence is Small ribosomal subunit protein uS9 (130 aa).

Belongs to the universal ribosomal protein uS9 family.

This is Small ribosomal subunit protein uS9 from Polaromonas naphthalenivorans (strain CJ2).